A 318-amino-acid chain; its full sequence is B3 domain-containing protein At1g05930 (318 aa).

The segment at residues 201–293 (FNRLISNDFL…VLCFAMRQWR (93 aa)) is a DNA-binding region (TF-B3).

The protein resides in the nucleus. The sequence is that of B3 domain-containing protein At1g05930 from Arabidopsis thaliana (Mouse-ear cress).